Reading from the N-terminus, the 616-residue chain is Chaperone protein HscA (616 aa).

Belongs to the heat shock protein 70 family.

Functionally, chaperone involved in the maturation of iron-sulfur cluster-containing proteins. Has a low intrinsic ATPase activity which is markedly stimulated by HscB. Involved in the maturation of IscU. This chain is Chaperone protein HscA, found in Escherichia coli O45:K1 (strain S88 / ExPEC).